Consider the following 495-residue polypeptide: L-2,4-diaminobutyrate decarboxylase (495 aa).

Lys312 carries the post-translational modification N6-(pyridoxal phosphate)lysine.

Belongs to the group II decarboxylase family. Requires pyridoxal 5'-phosphate as cofactor.

The catalysed reaction is L-2,4-diaminobutanoate + H(+) = propane-1,3-diamine + CO2. It functions in the pathway siderophore biosynthesis; rhizobactin biosynthesis. The polypeptide is L-2,4-diaminobutyrate decarboxylase (rhbB) (Rhizobium meliloti (strain 1021) (Ensifer meliloti)).